A 311-amino-acid chain; its full sequence is Nucleotide-binding protein Acel_1111 (311 aa).

30 to 37 (GLSGAGRS) provides a ligand contact to ATP. A GTP-binding site is contributed by 81–84 (DVRS).

The protein belongs to the RapZ-like family.

In terms of biological role, displays ATPase and GTPase activities. This is Nucleotide-binding protein Acel_1111 from Acidothermus cellulolyticus (strain ATCC 43068 / DSM 8971 / 11B).